Here is a 462-residue protein sequence, read N- to C-terminus: Chitinase-like mite allergen Der f 18.0101 (462 aa).

An N-terminal signal peptide occupies residues 1–25; that stretch reads MTRFSLTVLAVLAACFGSNIRPNVA. The region spanning 29-378 is the GH18 domain; the sequence is PKTVCYYESW…HAIQSNYYHG (350 aa). An intrachain disulfide couples Cys-33 to Cys-58. Asn-338 is a glycosylation site (N-linked (GlcNAc...) asparagine). The region spanning 404-462 is the Chitin-binding type-2 domain; that stretch reads VFHCHEEGFFRDKTYCATYYECKKGDFGLEKTVHHCANHLQAFDEVSRTCIDHTKIPGC. Cys-439 and Cys-453 are joined by a disulfide.

This sequence belongs to the glycosyl hydrolase 18 family. Chitinase class II subfamily. In terms of tissue distribution, expressed in the upper digestive tract. Staining is observed in the ventriculus, and in very rare individuals, also in the intestine or esophagus. No expression in fecal pellets neither inside the rectum nor defecated outside of the body.

The protein resides in the secreted. Functionally, probably a non-catalytic chitinase-like protein, which binds to insoluble chitin and enhances the activity of the catalytic chitinases. Has weak chitin-binding activity. This is Chitinase-like mite allergen Der f 18.0101 from Dermatophagoides farinae (American house dust mite).